Reading from the N-terminus, the 387-residue chain is 3-ketoacyl-CoA thiolase (387 aa).

Catalysis depends on Cys-91, which acts as the Acyl-thioester intermediate. Catalysis depends on proton acceptor residues His-343 and Cys-373.

The protein belongs to the thiolase-like superfamily. Thiolase family. Heterotetramer of two alpha chains (FadB) and two beta chains (FadA).

The protein resides in the cytoplasm. The catalysed reaction is an acyl-CoA + acetyl-CoA = a 3-oxoacyl-CoA + CoA. Its pathway is lipid metabolism; fatty acid beta-oxidation. Catalyzes the final step of fatty acid oxidation in which acetyl-CoA is released and the CoA ester of a fatty acid two carbons shorter is formed. This chain is 3-ketoacyl-CoA thiolase, found in Shewanella loihica (strain ATCC BAA-1088 / PV-4).